Here is a 216-residue protein sequence, read N- to C-terminus: Large ribosomal subunit protein uL1A (216 aa).

Serine 85 and serine 128 each carry phosphoserine.

Belongs to the universal ribosomal protein uL1 family. As to quaternary structure, component of the large ribosomal subunit (LSU). Mature yeast ribosomes consist of a small (40S) and a large (60S) subunit. The 40S small subunit contains 1 molecule of ribosomal RNA (18S rRNA) and at least 33 different proteins. The large 60S subunit contains 3 rRNA molecules (25S, 5.8S and 5S rRNA) and at least 46 different proteins. uL1 forms part of the L1 stalk.

The protein localises to the cytoplasm. Its function is as follows. Component of the ribosome, a large ribonucleoprotein complex responsible for the synthesis of proteins in the cell. The small ribosomal subunit (SSU) binds messenger RNAs (mRNAs) and translates the encoded message by selecting cognate aminoacyl-transfer RNA (tRNA) molecules. The large subunit (LSU) contains the ribosomal catalytic site termed the peptidyl transferase center (PTC), which catalyzes the formation of peptide bonds, thereby polymerizing the amino acids delivered by tRNAs into a polypeptide chain. The nascent polypeptides leave the ribosome through a tunnel in the LSU and interact with protein factors that function in enzymatic processing, targeting, and the membrane insertion of nascent chains at the exit of the ribosomal tunnel. uL1 forms part of the L1 stalk, a mobile element that plays a role in evacuating the exit-site tRNA. This chain is Large ribosomal subunit protein uL1A (rpl102), found in Schizosaccharomyces pombe (strain 972 / ATCC 24843) (Fission yeast).